A 1119-amino-acid chain; its full sequence is Protein translocase subunit SecA (1119 aa).

ATP-binding positions include Q175, 213–217 (GEGKT), and D714. Zn(2+) is bound by residues C1106, C1108, C1117, and C1118.

This sequence belongs to the SecA family. As to quaternary structure, monomer and homodimer. Part of the essential Sec protein translocation apparatus which comprises SecA, SecYEG and auxiliary proteins SecDF. Other proteins may also be involved. Zn(2+) serves as cofactor.

The protein localises to the cell inner membrane. It localises to the cytoplasm. The enzyme catalyses ATP + H2O + cellular proteinSide 1 = ADP + phosphate + cellular proteinSide 2.. In terms of biological role, part of the Sec protein translocase complex. Interacts with the SecYEG preprotein conducting channel. Has a central role in coupling the hydrolysis of ATP to the transfer of proteins into and across the cell membrane, serving as an ATP-driven molecular motor driving the stepwise translocation of polypeptide chains across the membrane. The polypeptide is Protein translocase subunit SecA (Azobacteroides pseudotrichonymphae genomovar. CFP2).